Consider the following 133-residue polypeptide: Large ribosomal subunit protein uL16c (133 aa).

It belongs to the universal ribosomal protein uL16 family. As to quaternary structure, part of the 50S ribosomal subunit.

It is found in the plastid. Its subcellular location is the chloroplast. This chain is Large ribosomal subunit protein uL16c, found in Liriodendron tulipifera (Tuliptree).